A 209-amino-acid chain; its full sequence is Ubiquitin-conjugating enzyme E2 S (209 aa).

A UBC core domain is found at 14-160; sequence QTIRQVMREL…ARMMTEIHAQ (147 aa). Cysteine 98 serves as the catalytic Glycyl thioester intermediate. Positions 164–209 are disordered; sequence CGVGASGDAKDDDGPSTKKHAGLDKKLQDKKKEKLLKEKKRMLKRL. The span at 171–199 shows a compositional bias: basic and acidic residues; that stretch reads DAKDDDGPSTKKHAGLDKKLQDKKKEKLL. The span at 200–209 shows a compositional bias: basic residues; it reads KEKKRMLKRL.

The protein belongs to the ubiquitin-conjugating enzyme family.

The enzyme catalyses S-ubiquitinyl-[E1 ubiquitin-activating enzyme]-L-cysteine + [E2 ubiquitin-conjugating enzyme]-L-cysteine = [E1 ubiquitin-activating enzyme]-L-cysteine + S-ubiquitinyl-[E2 ubiquitin-conjugating enzyme]-L-cysteine.. Its pathway is protein modification; protein ubiquitination. In terms of biological role, catalyzes the covalent attachment of ubiquitin to other proteins. Acts as an essential factor of the anaphase promoting complex/cyclosome (APC/C), a cell cycle-regulated ubiquitin ligase that controls progression through mitosis. Acts by specifically elongating polyubiquitin chains initiated by the E2 enzyme vih/UbcH10 on APC/C substrates, enhancing the degradation of APC/C substrates by the proteasome and promoting mitotic exit. This Drosophila yakuba (Fruit fly) protein is Ubiquitin-conjugating enzyme E2 S.